Consider the following 141-residue polypeptide: Period circadian protein (141 aa).

The tract at residues 1 to 141 (EGSGGSGSSG…VTLTESLLNK (141 aa)) is disordered. Residues 11–23 (HFTTGSNVHMSSV) are compositionally biased toward polar residues. The span at 29–68 (GGTGGTGTGTGTGTGTGTGTGTGTGTGTGTGTGTGTGTGT) shows a compositional bias: gly residues. Tandem repeats lie at residues 30–31 (GT), 33–34 (GT), 35–36 (GT), 37–38 (GT), 39–40 (GT), 41–42 (GT), 43–44 (GT), 45–46 (GT), 47–48 (GT), 49–50 (GT), 51–52 (GT), 53–54 (GT), 55–56 (GT), 57–58 (GT), 59–60 (GT), 61–62 (GT), 63–64 (GT), 65–66 (GT), and 67–68 (GT). Residues 30 to 94 (GTGGTGTGTG…ANGTGTGKGT (65 aa)) are 32 X 2 AA approximate tandem repeats of G-T. One copy of the 20; approximate repeat lies at 69–70 (AS). The span at 69 to 85 (ASGTATGTASGTATGTA) shows a compositional bias: low complexity. The stretch at 71–72 (GT) is repeat 21. The stretch at 73-74 (AT) is one 22; approximate repeat. The stretch at 75-76 (GT) is repeat 23. The 24; approximate repeat unit spans residues 77 to 78 (AS). Copy 25 of the repeat occupies 79 to 80 (GT). One copy of the 26; approximate repeat lies at 81-82 (AT). Copy 27 of the repeat occupies 83-84 (GT). The 28; approximate repeat unit spans residues 85–86 (AN). 2 consecutive repeat copies span residues 87–88 (GT) and 89–90 (GT). One copy of the 31; approximate repeat lies at 91–92 (GK). Residues 93 to 94 (GT) form repeat 32. Positions 101-113 (SGSGSGTGTGTGT) are enriched in gly residues. Over residues 114 to 129 (GTTTTTTTGNNSSSST) the composition is skewed to low complexity. Residues 130 to 141 (PPVTLTESLLNK) show a composition bias toward polar residues.

As to quaternary structure, forms a heterodimer with timeless (TIM); the complex then translocates into the nucleus. In terms of processing, phosphorylated with a circadian rhythmicity, probably by the double-time protein (dbt). Phosphorylation could be implicated in the stability of per monomer and in the formation of heterodimer per-tim.

Its subcellular location is the nucleus. It localises to the cytoplasm. The protein resides in the perinuclear region. Its function is as follows. Essential for biological clock functions. Determines the period length of circadian and ultradian rhythms; an increase in PER dosage leads to shortened circadian rhythms and a decrease leads to lengthened circadian rhythms. Essential for the circadian rhythmicity of locomotor activity, eclosion behavior, and for the rhythmic component of the male courtship song that originates in the thoracic nervous system. The biological cycle depends on the rhythmic formation and nuclear localization of the TIM-PER complex. Light induces the degradation of TIM, which promotes elimination of PER. Nuclear activity of the heterodimer coordinatively regulates PER and TIM transcription through a negative feedback loop. Behaves as a negative element in circadian transcriptional loop. Does not appear to bind DNA, suggesting indirect transcriptional inhibition. This Drosophila serrata (Fruit fly) protein is Period circadian protein (per).